The primary structure comprises 54 residues: Photosystem II reaction center protein K (54 aa).

Residues 1–17 constitute a propeptide that is removed on maturation; the sequence is MSFITLNNFFNTNTFFG. Residues 29–49 form a helical membrane-spanning segment; it reads LIDVLPIIPVLFFLLAFVWQA.

The protein belongs to the PsbK family. As to quaternary structure, PSII is composed of 1 copy each of membrane proteins PsbA, PsbB, PsbC, PsbD, PsbE, PsbF, PsbH, PsbI, PsbJ, PsbK, PsbL, PsbM, PsbT, PsbY, PsbZ, Psb30/Ycf12, at least 3 peripheral proteins of the oxygen-evolving complex and a large number of cofactors. It forms dimeric complexes.

It localises to the plastid. It is found in the chloroplast thylakoid membrane. Functionally, one of the components of the core complex of photosystem II (PSII). PSII is a light-driven water:plastoquinone oxidoreductase that uses light energy to abstract electrons from H(2)O, generating O(2) and a proton gradient subsequently used for ATP formation. It consists of a core antenna complex that captures photons, and an electron transfer chain that converts photonic excitation into a charge separation. In Euglena gracilis, this protein is Photosystem II reaction center protein K.